We begin with the raw amino-acid sequence, 258 residues long: Acetylglutamate kinase (258 aa).

Substrate is bound by residues 44 to 45, R66, and N158; that span reads GG. Residues 181-186 and 209-211 contribute to the ATP site; these read DVSGIL and IIT.

This sequence belongs to the acetylglutamate kinase family. ArgB subfamily. In terms of assembly, homodimer.

It localises to the cytoplasm. It carries out the reaction N-acetyl-L-glutamate + ATP = N-acetyl-L-glutamyl 5-phosphate + ADP. It functions in the pathway amino-acid biosynthesis; L-arginine biosynthesis; N(2)-acetyl-L-ornithine from L-glutamate: step 2/4. Catalyzes the ATP-dependent phosphorylation of N-acetyl-L-glutamate. In Salmonella paratyphi A (strain ATCC 9150 / SARB42), this protein is Acetylglutamate kinase.